The sequence spans 292 residues: Phosphatidylglycerol--prolipoprotein diacylglyceryl transferase (292 aa).

7 helical membrane-spanning segments follow: residues 25–45, 70–90, 102–122, 138–158, 193–213, 217–237, and 255–275; these read ITLH…WWYA, FVVW…VLVW, IIAV…IIIA, FDII…CNFI, FMEG…FKAF, GTVS…SEVY, and GFTY…YLLL. Arg153 lines the a 1,2-diacyl-sn-glycero-3-phospho-(1'-sn-glycerol) pocket.

Belongs to the Lgt family.

The protein localises to the cell inner membrane. It catalyses the reaction L-cysteinyl-[prolipoprotein] + a 1,2-diacyl-sn-glycero-3-phospho-(1'-sn-glycerol) = an S-1,2-diacyl-sn-glyceryl-L-cysteinyl-[prolipoprotein] + sn-glycerol 1-phosphate + H(+). Its pathway is protein modification; lipoprotein biosynthesis (diacylglyceryl transfer). In terms of biological role, catalyzes the transfer of the diacylglyceryl group from phosphatidylglycerol to the sulfhydryl group of the N-terminal cysteine of a prolipoprotein, the first step in the formation of mature lipoproteins. The chain is Phosphatidylglycerol--prolipoprotein diacylglyceryl transferase from Bartonella tribocorum (strain CIP 105476 / IBS 506).